The chain runs to 104 residues: Large ribosomal subunit protein uL24 (104 aa).

This sequence belongs to the universal ribosomal protein uL24 family. Part of the 50S ribosomal subunit.

Its function is as follows. One of two assembly initiator proteins, it binds directly to the 5'-end of the 23S rRNA, where it nucleates assembly of the 50S subunit. Functionally, one of the proteins that surrounds the polypeptide exit tunnel on the outside of the subunit. The chain is Large ribosomal subunit protein uL24 from Yersinia enterocolitica serotype O:8 / biotype 1B (strain NCTC 13174 / 8081).